A 510-amino-acid polypeptide reads, in one-letter code: MNKKNHEDSNSFKKYSAIKENDSVDVVLIGSGIMSATLGIYLKLLEPNWIIHSYERLNKVGQESSNAWNNAGTGHSAFCELNYTSINKDGSINISKAIKVNESFEISKQLWAYLIKEKILVNSSSFINTVPHMSFVWGENNINFLKKRFFYLKQNALFKDMLYSENYDIIKKWAPLIMEGRSINEKVAATRMEIGTDVNFGEITKQIFYYLKNKSNFFLYLNHDVIDIIRNKDKTWCLKVVDNILKKTIKINSKYVFIGSGGGALKLLQKSKIEQSIGYAGFPVGGQFLVTKNKKLTNNHQAKVYGKSPIGAPPMSVPHIDTRIINGEKVLLFGPFATFSSKFLKNGSYFDLFSSLTKENIIPILQVGINNFNLVKYLINQLLKSKRGKFNDLCKYLPTAKMKDWSLITAGQRVQIIKKDIEKGGILEFGTEIINSKDCTLSALLGASPGASTSASTMLDLLKIMFYDKINKSEWKSKLNKIFISYNKKIHESYEYTLEIRNYTSKILSL.

It belongs to the MQO family. The cofactor is FAD.

It carries out the reaction (S)-malate + a quinone = a quinol + oxaloacetate. Its pathway is carbohydrate metabolism; tricarboxylic acid cycle; oxaloacetate from (S)-malate (quinone route): step 1/1. The chain is Probable malate:quinone oxidoreductase from Wigglesworthia glossinidia brevipalpis.